A 116-amino-acid polypeptide reads, in one-letter code: Beta-2-microglobulin (116 aa).

The first 19 residues, 1-19 (MKFLLSFVVLAVFSASAFA), serve as a signal peptide directing secretion. The Ig-like C1-type domain maps to 24–111 (PKIQVYSRNP…RHLKETKNIS (88 aa)). Cys44 and Cys99 are joined by a disulfide.

Belongs to the beta-2-microglobulin family. Heterodimer of an alpha chain and a beta chain. Beta-2-microglobulin is the beta-chain of major histocompatibility complex class I molecules.

The protein resides in the secreted. Component of the class I major histocompatibility complex (MHC). Involved in the presentation of peptide antigens to the immune system. This chain is Beta-2-microglobulin (b2m), found in Ictalurus punctatus (Channel catfish).